The primary structure comprises 529 residues: ATP synthase subunit alpha (529 aa).

Glycine 173 to threonine 180 serves as a coordination point for ATP.

The protein belongs to the ATPase alpha/beta chains family. As to quaternary structure, F-type ATPases have 2 components, CF(1) - the catalytic core - and CF(0) - the membrane proton channel. CF(1) has five subunits: alpha(3), beta(3), gamma(1), delta(1), epsilon(1). CF(0) has three main subunits: a(1), b(2) and c(9-12). The alpha and beta chains form an alternating ring which encloses part of the gamma chain. CF(1) is attached to CF(0) by a central stalk formed by the gamma and epsilon chains, while a peripheral stalk is formed by the delta and b chains.

The protein resides in the cell membrane. It catalyses the reaction ATP + H2O + 4 H(+)(in) = ADP + phosphate + 5 H(+)(out). Functionally, produces ATP from ADP in the presence of a proton gradient across the membrane. The alpha chain is a regulatory subunit. The chain is ATP synthase subunit alpha from Streptomyces lividans.